Here is a 329-residue protein sequence, read N- to C-terminus: GTP 3',8-cyclase (329 aa).

The region spanning 8 to 229 (AFARTFYYLR…AGWQRRLPGR (222 aa)) is the Radical SAM core domain. R17 contributes to the GTP binding site. Residues C24 and C28 each contribute to the [4Fe-4S] cluster site. Residue Y30 participates in S-adenosyl-L-methionine binding. Residue C31 participates in [4Fe-4S] cluster binding. R68 contributes to the GTP binding site. S-adenosyl-L-methionine is bound at residue G72. GTP is bound at residue T99. S123 contributes to the S-adenosyl-L-methionine binding site. A GTP-binding site is contributed by K160. M194 contacts S-adenosyl-L-methionine. The [4Fe-4S] cluster site is built by C257 and C260. 262–264 (RLR) serves as a coordination point for GTP. [4Fe-4S] cluster is bound at residue C274.

This sequence belongs to the radical SAM superfamily. MoaA family. As to quaternary structure, monomer and homodimer. [4Fe-4S] cluster serves as cofactor.

It carries out the reaction GTP + AH2 + S-adenosyl-L-methionine = (8S)-3',8-cyclo-7,8-dihydroguanosine 5'-triphosphate + 5'-deoxyadenosine + L-methionine + A + H(+). It functions in the pathway cofactor biosynthesis; molybdopterin biosynthesis. In terms of biological role, catalyzes the cyclization of GTP to (8S)-3',8-cyclo-7,8-dihydroguanosine 5'-triphosphate. The polypeptide is GTP 3',8-cyclase (Edwardsiella ictaluri (strain 93-146)).